A 327-amino-acid chain; its full sequence is Endo-1,4-beta-xylanase A (327 aa).

The region spanning 1-323 is the GH10 domain; the sequence is AASGLEAAMK…KPSYTSTLNT (323 aa). A disulfide bond links C81 and C123. N101 carries an N-linked (GlcNAc...) asparagine glycan. The active-site Proton donor is E131. E245 acts as the Nucleophile in catalysis. C273 and C279 are disulfide-bonded.

It belongs to the glycosyl hydrolase 10 (cellulase F) family. As to quaternary structure, monomer.

The protein localises to the secreted. It is found in the extracellular space. The catalysed reaction is Endohydrolysis of (1-&gt;4)-beta-D-xylosidic linkages in xylans.. It functions in the pathway glycan degradation; xylan degradation. In terms of biological role, catalyzes the hydrolysis of the internal glycosidic bonds in heteroxylans, releasing mainly xylobiose and xylotriose. Most active on oat-spelt xylan. The protein is Endo-1,4-beta-xylanase A of Fusarium oxysporum f. sp. lycopersici (strain 4287 / CBS 123668 / FGSC 9935 / NRRL 34936) (Fusarium vascular wilt of tomato).